The primary structure comprises 167 residues: Nascent polypeptide-associated complex subunit beta (167 aa).

2 disordered regions span residues 1–48 (MDQA…GADD) and 133–167 (QNMQ…SKVE). A compositionally biased stretch (basic residues) spans 25–42 (NRNRGKGTPRRKVKKVHK). The region spanning 45 to 110 (GADDKKLQAT…GEEKELTELV (66 aa)) is the NAC-A/B domain. Positions 148–161 (DEEDDIPDLVEGQD) are enriched in acidic residues.

This sequence belongs to the NAC-beta family. Part of the nascent polypeptide-associated complex (NAC), consisting of egd2 and egd1. NAC associates with ribosomes via egd1.

The protein resides in the cytoplasm. It is found in the nucleus. Its function is as follows. Component of the nascent polypeptide-associated complex (NAC), a dynamic component of the ribosomal exit tunnel, protecting the emerging polypeptides from interaction with other cytoplasmic proteins to ensure appropriate nascent protein targeting. The NAC complex also promotes mitochondrial protein import by enhancing productive ribosome interactions with the outer mitochondrial membrane and blocks the inappropriate interaction of ribosomes translating non-secretory nascent polypeptides with translocation sites in the membrane of the endoplasmic reticulum. EGD1 may act as a transcription factor that exert a negative effect on the expression of several genes that are transcribed by RNA polymerase II. This Aspergillus terreus (strain NIH 2624 / FGSC A1156) protein is Nascent polypeptide-associated complex subunit beta (egd1).